The chain runs to 452 residues: Ribosomal protein uS12 methylthiotransferase RimO (452 aa).

Residues 3 to 118 (GKIGFVSLGC…VMQVIHLHLP (116 aa)) form the MTTase N-terminal domain. [4Fe-4S] cluster is bound by residues cysteine 12, cysteine 48, cysteine 77, cysteine 149, cysteine 153, and cysteine 156. In terms of domain architecture, Radical SAM core spans 135–382 (LTPKHYAYLK…AKAEEISVGR (248 aa)). Residues 384–452 (AKKIGKRLQV…SQGHDLIAET (69 aa)) enclose the TRAM domain.

Belongs to the methylthiotransferase family. RimO subfamily. Requires [4Fe-4S] cluster as cofactor.

It is found in the cytoplasm. The enzyme catalyses L-aspartate(89)-[ribosomal protein uS12]-hydrogen + (sulfur carrier)-SH + AH2 + 2 S-adenosyl-L-methionine = 3-methylsulfanyl-L-aspartate(89)-[ribosomal protein uS12]-hydrogen + (sulfur carrier)-H + 5'-deoxyadenosine + L-methionine + A + S-adenosyl-L-homocysteine + 2 H(+). Functionally, catalyzes the methylthiolation of an aspartic acid residue of ribosomal protein uS12. This chain is Ribosomal protein uS12 methylthiotransferase RimO, found in Polynucleobacter necessarius subsp. necessarius (strain STIR1).